A 257-amino-acid chain; its full sequence is Major prion protein (257 aa).

Residues 1 to 24 (MVKSHIGSWLLVLFVATWSDIGFC) form the signal peptide. The segment at 25–234 (KKRPKPGGGW…ESEAYYQRGA (210 aa)) is interaction with GRB2, ERI3 and SYN1. Residues 27 to 114 (RPKPGGGWNT…KPSKPKTNMK (88 aa)) are disordered. Repeat copies occupy residues 54–62 (PQGGGGWGQ), 63–70 (PHGGGWGQ), 71–78 (PHGGGWGQ), 79–86 (PHGGGWGQ), and 87–95 (PHGGGGWGQ). The 5 X 8 AA tandem repeats of P-H-G-G-G-W-G-Q stretch occupies residues 54-95 (PQGGGGWGQPHGGGWGQPHGGGWGQPHGGGWGQPHGGGGWGQ). Residues 55 to 101 (QGGGGWGQPHGGGWGQPHGGGWGQPHGGGWGQPHGGGGWGQGGGSHG) show a composition bias toward gly residues. 12 residues coordinate Cu(2+): histidine 64, glycine 65, glycine 66, histidine 72, glycine 73, glycine 74, histidine 80, glycine 81, glycine 82, histidine 88, glycine 90, and glycine 91. Cysteine 183 and cysteine 218 are joined by a disulfide. N-linked (GlcNAc...) asparagine glycosylation is found at asparagine 185 and asparagine 201. Residue alanine 234 is the site of GPI-anchor amidated alanine attachment. Residues 235-257 (SAILFSPPPVILLISLLILLIVG) constitute a propeptide, removed in mature form.

It belongs to the prion family. In terms of assembly, monomer and homodimer. Has a tendency to aggregate into amyloid fibrils containing a cross-beta spine, formed by a steric zipper of superposed beta-strands. Soluble oligomers may represent an intermediate stage on the path to fibril formation. Copper binding may promote oligomerization. Interacts with GRB2, APP, ERI3/PRNPIP and SYN1. Mislocalized cytosolically exposed PrP interacts with MGRN1; this interaction alters MGRN1 subcellular location and causes lysosomal enlargement. Interacts with KIAA1191.

It is found in the cell membrane. The protein resides in the golgi apparatus. Its function is as follows. Its primary physiological function is unclear. Has cytoprotective activity against internal or environmental stresses. May play a role in neuronal development and synaptic plasticity. May be required for neuronal myelin sheath maintenance. May play a role in iron uptake and iron homeostasis. Soluble oligomers are toxic to cultured neuroblastoma cells and induce apoptosis (in vitro). Association with GPC1 (via its heparan sulfate chains) targets PRNP to lipid rafts. Also provides Cu(2+) or Zn(2+) for the ascorbate-mediated GPC1 deaminase degradation of its heparan sulfate side chains. The chain is Major prion protein (PRNP) from Mustela putorius furo (European domestic ferret).